An 83-amino-acid chain; its full sequence is RNA-binding protein Hfq (83 aa).

Residues 10–69 enclose the Sm domain; it reads DPFLNALRREHVPVSIYLVNGIKLQGQIESFDQYVVLLRNTVTQMVYKHAISTIVPGRAV.

Belongs to the Hfq family. As to quaternary structure, homohexamer.

RNA chaperone that binds small regulatory RNA (sRNAs) and mRNAs to facilitate mRNA translational regulation in response to envelope stress, environmental stress and changes in metabolite concentrations. Also binds with high specificity to tRNAs. The protein is RNA-binding protein Hfq of Acidovorax ebreus (strain TPSY) (Diaphorobacter sp. (strain TPSY)).